Consider the following 469-residue polypeptide: Interstitial collagenase (469 aa).

The N-terminal stretch at 1 to 18 is a signal peptide; the sequence is MPRLPLLLLLLWGTGSHG. Residues 19-99 constitute a propeptide, activation peptide; sequence FPAATSETQE…PRCGVPDVAP (81 aa). A Cysteine switch motif is present at residues 90–97; the sequence is PRCGVPDV. Residue Cys92 participates in Zn(2+) binding. A glycan (N-linked (GlcNAc...) asparagine) is linked at Asn120. Residues Asp124 and Asp158 each coordinate Ca(2+). His168 and Asp170 together coordinate Zn(2+). Ca(2+) contacts are provided by Asp175, Gly176, Gly178, and Asn180. His183 lines the Zn(2+) pocket. Ca(2+) is bound by residues Gly190, Gly192, and Asp194. His196 contributes to the Zn(2+) binding site. Residues Asp198, Asp199, and Glu201 each coordinate Ca(2+). His218 serves as a coordination point for Zn(2+). Glu219 is an active-site residue. Residues His222 and His228 each coordinate Zn(2+). Thr274 carries the post-translational modification Phosphothreonine. Hemopexin repeat units lie at residues 275 to 324, 325 to 371, 374 to 422, and 423 to 466; these read PEVC…WPQL, PNGL…FGFP, VKSI…FPGI, and GNKV…WFNC. Cys278 and Cys466 are disulfide-bonded. Ca(2+)-binding residues include Asp285 and Gln329. Phosphotyrosine; by PKDCC is present on Tyr360. Ca(2+) contacts are provided by Asp378 and Asp427.

It belongs to the peptidase M10A family. The cofactor is Ca(2+). It depends on Zn(2+) as a cofactor. In terms of processing, tyrosine phosphorylated in platelets by PKDCC/VLK.

It is found in the secreted. It localises to the extracellular space. Its subcellular location is the extracellular matrix. It catalyses the reaction Cleavage of the triple helix of collagen at about three-quarters of the length of the molecule from the N-terminus, at 775-Gly-|-Ile-776 in the alpha1(I) chain. Cleaves synthetic substrates and alpha-macroglobulins at bonds where P1' is a hydrophobic residue.. Can be activated without removal of the activation peptide. In terms of biological role, cleaves collagens of types I, II, and III at one site in the helical domain. Also cleaves collagens of types VII and X. The sequence is that of Interstitial collagenase (MMP1) from Bos taurus (Bovine).